Consider the following 238-residue polypeptide: Probable transcriptional regulatory protein SZO_02930 (238 aa).

The protein belongs to the TACO1 family. YeeN subfamily.

It localises to the cytoplasm. The protein is Probable transcriptional regulatory protein SZO_02930 of Streptococcus equi subsp. zooepidemicus (strain H70).